The chain runs to 160 residues: Putative pre-16S rRNA nuclease (160 aa).

The protein belongs to the YqgF nuclease family.

The protein localises to the cytoplasm. Functionally, could be a nuclease involved in processing of the 5'-end of pre-16S rRNA. In Cereibacter sphaeroides (strain ATCC 17025 / ATH 2.4.3) (Rhodobacter sphaeroides), this protein is Putative pre-16S rRNA nuclease.